The chain runs to 70 residues: MPNQSGSNSSNQLLVPGAAQAIDQMKFEIASEFGVNLGAETTSRANGSVGGEITKRLVSFAQQQMGGGVQ.

The protein belongs to the alpha/beta-type SASP family.

Functionally, SASP are bound to spore DNA. They are double-stranded DNA-binding proteins that cause DNA to change to an a-like conformation. They protect the DNA backbone from chemical and enzymatic cleavage and are thus involved in dormant spore's high resistance to UV light. The polypeptide is Small, acid-soluble spore protein 1 (Bacillus subtilis).